Consider the following 227-residue polypeptide: Cytochrome c oxidase subunit 2 (227 aa).

The Mitochondrial intermembrane segment spans residues 1–14 (MPYPMQLGFQDATS). The helical transmembrane segment at 15-45 (PIMEELTYFHDHTLMIVFLISSLVLYIIILM) threads the bilayer. The Mitochondrial matrix segment spans residues 46 to 59 (LTTKLTHTSTMDAQ). A helical membrane pass occupies residues 60–87 (EVETIWTILPAVILVLIALPSLRILYMM). Topologically, residues 88–227 (DEIYNPYLTI…YFEKWSSMMQ (140 aa)) are mitochondrial intermembrane. Residues H161, C196, E198, C200, H204, and M207 each contribute to the Cu cation site. Position 198 (E198) interacts with Mg(2+). Residue Y218 is modified to Phosphotyrosine.

The protein belongs to the cytochrome c oxidase subunit 2 family. In terms of assembly, component of the cytochrome c oxidase (complex IV, CIV), a multisubunit enzyme composed of 14 subunits. The complex is composed of a catalytic core of 3 subunits MT-CO1, MT-CO2 and MT-CO3, encoded in the mitochondrial DNA, and 11 supernumerary subunits COX4I, COX5A, COX5B, COX6A, COX6B, COX6C, COX7A, COX7B, COX7C, COX8 and NDUFA4, which are encoded in the nuclear genome. The complex exists as a monomer or a dimer and forms supercomplexes (SCs) in the inner mitochondrial membrane with NADH-ubiquinone oxidoreductase (complex I, CI) and ubiquinol-cytochrome c oxidoreductase (cytochrome b-c1 complex, complex III, CIII), resulting in different assemblies (supercomplex SCI(1)III(2)IV(1) and megacomplex MCI(2)III(2)IV(2)). Found in a complex with TMEM177, COA6, COX18, COX20, SCO1 and SCO2. Interacts with TMEM177 in a COX20-dependent manner. Interacts with COX20. Interacts with COX16. Requires Cu cation as cofactor.

The protein resides in the mitochondrion inner membrane. It catalyses the reaction 4 Fe(II)-[cytochrome c] + O2 + 8 H(+)(in) = 4 Fe(III)-[cytochrome c] + 2 H2O + 4 H(+)(out). Functionally, component of the cytochrome c oxidase, the last enzyme in the mitochondrial electron transport chain which drives oxidative phosphorylation. The respiratory chain contains 3 multisubunit complexes succinate dehydrogenase (complex II, CII), ubiquinol-cytochrome c oxidoreductase (cytochrome b-c1 complex, complex III, CIII) and cytochrome c oxidase (complex IV, CIV), that cooperate to transfer electrons derived from NADH and succinate to molecular oxygen, creating an electrochemical gradient over the inner membrane that drives transmembrane transport and the ATP synthase. Cytochrome c oxidase is the component of the respiratory chain that catalyzes the reduction of oxygen to water. Electrons originating from reduced cytochrome c in the intermembrane space (IMS) are transferred via the dinuclear copper A center (CU(A)) of subunit 2 and heme A of subunit 1 to the active site in subunit 1, a binuclear center (BNC) formed by heme A3 and copper B (CU(B)). The BNC reduces molecular oxygen to 2 water molecules using 4 electrons from cytochrome c in the IMS and 4 protons from the mitochondrial matrix. This chain is Cytochrome c oxidase subunit 2 (MT-CO2), found in Osphranter robustus (Wallaroo).